A 69-amino-acid polypeptide reads, in one-letter code: Protein translocase subunit SecE (69 aa).

A helical transmembrane segment spans residues 43-63; the sequence is GLGICLLGFVGFVIHVPITYL.

Belongs to the SecE/SEC61-gamma family. Component of the Sec protein translocase complex. Heterotrimer consisting of SecY (alpha), SecG (beta) and SecE (gamma) subunits. The heterotrimers can form oligomers, although 1 heterotrimer is thought to be able to translocate proteins. Interacts with the ribosome. May interact with SecDF, and other proteins may be involved.

The protein localises to the cell membrane. In terms of biological role, essential subunit of the Sec protein translocation channel SecYEG. Clamps together the 2 halves of SecY. May contact the channel plug during translocation. The polypeptide is Protein translocase subunit SecE (Methanococcus maripaludis (strain DSM 14266 / JCM 13030 / NBRC 101832 / S2 / LL)).